A 612-amino-acid polypeptide reads, in one-letter code: Sulfite reductase [NADPH] hemoprotein beta-component (612 aa).

A disordered region spans residues 1-26 (MDDHKPIETPDGPAVDTPGIGARRYE). [4Fe-4S] cluster is bound by residues C469, C475, C514, and C518. C518 contributes to the siroheme binding site.

This sequence belongs to the nitrite and sulfite reductase 4Fe-4S domain family. As to quaternary structure, alpha(8)-beta(8). The alpha component is a flavoprotein, the beta component is a hemoprotein. The cofactor is siroheme. It depends on [4Fe-4S] cluster as a cofactor.

It catalyses the reaction hydrogen sulfide + 3 NADP(+) + 3 H2O = sulfite + 3 NADPH + 4 H(+). It functions in the pathway sulfur metabolism; hydrogen sulfide biosynthesis; hydrogen sulfide from sulfite (NADPH route): step 1/1. In terms of biological role, component of the sulfite reductase complex that catalyzes the 6-electron reduction of sulfite to sulfide. This is one of several activities required for the biosynthesis of L-cysteine from sulfate. This Methylorubrum extorquens (strain PA1) (Methylobacterium extorquens) protein is Sulfite reductase [NADPH] hemoprotein beta-component.